Here is a 242-residue protein sequence, read N- to C-terminus: Glutamine transport ATP-binding protein GlnQ (242 aa).

Positions 2–236 (IYFHQVNKYY…PKEERAKVFL (235 aa)) constitute an ABC transporter domain. Position 34–41 (34–41 (GPSGSGKS)) interacts with ATP.

It belongs to the ABC transporter superfamily.

It is found in the cell membrane. In terms of biological role, part of the binding-protein-dependent transport system for glutamine. Probably responsible for energy coupling to the transport system. The chain is Glutamine transport ATP-binding protein GlnQ (glnQ) from Geobacillus stearothermophilus (Bacillus stearothermophilus).